A 259-amino-acid polypeptide reads, in one-letter code: UPF0246 protein PSPPH_1119 (259 aa).

Belongs to the UPF0246 family.

The protein is UPF0246 protein PSPPH_1119 of Pseudomonas savastanoi pv. phaseolicola (strain 1448A / Race 6) (Pseudomonas syringae pv. phaseolicola (strain 1448A / Race 6)).